Reading from the N-terminus, the 454-residue chain is Peroxisome assembly protein 10 (454 aa).

Residues 1 to 23 (MATQPPPARPPPPLTSSPYPYAA) are Peroxisomal matrix-facing. The chain crosses the membrane as a helical span at residues 24 to 53 (APDIIRAHQKDAYFQGVLANRLSDLHRRLR). Residue glycine 54 is a topological domain, cytoplasmic. A helical transmembrane segment spans residues 55–76 (ARSAHAWAAETRTFAAALYLCL). Over 77–132 (TTLLGNRTLGEEYCDLVQVEEAPSKLFASSSSKAADDHIYENGLGGGGDGGPLLPS) the chain is Peroxisomal matrix. The helical transmembrane segment at 133–165 (LPRRAGYILTAIVLPHLASRALPSVRSAIRKRL) threads the bilayer. Over 166-201 (QSRLATLSRRRQQTGTKSGSGRGGRGGGGGITEYRV) the chain is Cytoplasmic. The interval 171–194 (TLSRRRQQTGTKSGSGRGGRGGGG) is disordered. Residues 183-194 (SGSGRGGRGGGG) are compositionally biased toward gly residues. The chain crosses the membrane as a helical span at residues 202–229 (LRYLLTHLTPLTSGAHFRAATLAVFYFT). Residues 230–276 (GAYYELSKWVWGLRYVFTTRAGRVVDDDHNRHHHSPQHGGGNGGRAG) lie on the Peroxisomal matrix side of the membrane. The chain crosses the membrane as a helical span at residues 277-296 (YEVLGVLLVVQMAVRAWLHV). The Cytoplasmic portion of the chain corresponds to 297–454 (REQLSSGSVA…VQHILPLRAA (158 aa)). The disordered stretch occupies residues 302–329 (SGSVAGGGGEEEEDGEDGFRERTAFGPG). Zn(2+) is bound by residues cysteine 402, cysteine 405, cysteine 417, histidine 419, cysteine 422, cysteine 425, cysteine 436, and cysteine 439. The RING-type zinc finger occupies 402 to 440 (CTLCLEELKDPAATQCGHVFCWACIGDWVREKPECPLCR).

Belongs to the pex2/pex10/pex12 family. As to quaternary structure, component of the PEX2-PEX10-PEX12 retrotranslocation channel, composed of PEX2, PEX10 and PEX12.

It localises to the peroxisome membrane. The enzyme catalyses S-ubiquitinyl-[E2 ubiquitin-conjugating enzyme]-L-cysteine + [acceptor protein]-L-lysine = [E2 ubiquitin-conjugating enzyme]-L-cysteine + N(6)-ubiquitinyl-[acceptor protein]-L-lysine.. It participates in protein modification; protein ubiquitination. Its activity is regulated as follows. The E3 ubiquitin-protein ligase activity is stimulated by PEX12. Its function is as follows. E3 ubiquitin-protein ligase component of a retrotranslocation channel required for peroxisome organization by mediating export of the PEX5 receptor from peroxisomes to the cytosol, thereby promoting PEX5 recycling. The retrotranslocation channel is composed of PEX2, PEX10 and PEX12; each subunit contributing transmembrane segments that coassemble into an open channel that specifically allows the passage of PEX5 through the peroxisomal membrane. PEX10 also regulates PEX5 recycling by acting as a E3 ubiquitin-protein ligase. When PEX5 recycling is compromised, PEX10 catalyzes polyubiquitination of PEX5 during its passage through the retrotranslocation channel, leading to its degradation. The polypeptide is Peroxisome assembly protein 10 (Thermothelomyces thermophilus (strain ATCC 42464 / BCRC 31852 / DSM 1799) (Sporotrichum thermophile)).